The chain runs to 296 residues: dTDP-rhamnosyl transferase RfbF (296 aa).

Belongs to the glycosyltransferase 2 family.

Its pathway is bacterial outer membrane biogenesis; lipopolysaccharide biosynthesis. The protein is dTDP-rhamnosyl transferase RfbF (rfbF) of Shigella flexneri.